Reading from the N-terminus, the 610-residue chain is Elongation factor 4 (610 aa).

Positions 11–193 (ENIRNFSIIA…QIVEKVPAPS (183 aa)) constitute a tr-type G domain. GTP contacts are provided by residues 23–28 (DHGKST) and 140–143 (NKID).

Belongs to the TRAFAC class translation factor GTPase superfamily. Classic translation factor GTPase family. LepA subfamily.

It localises to the cell membrane. It carries out the reaction GTP + H2O = GDP + phosphate + H(+). Functionally, required for accurate and efficient protein synthesis under certain stress conditions. May act as a fidelity factor of the translation reaction, by catalyzing a one-codon backward translocation of tRNAs on improperly translocated ribosomes. Back-translocation proceeds from a post-translocation (POST) complex to a pre-translocation (PRE) complex, thus giving elongation factor G a second chance to translocate the tRNAs correctly. Binds to ribosomes in a GTP-dependent manner. This is Elongation factor 4 from Streptococcus equi subsp. equi (strain 4047).